The primary structure comprises 428 residues: Acylglycerol kinase, mitochondrial (428 aa).

The tract at residues 18–34 (STVGFCLLAYGSHWLYG) is hydrophobic. The region spanning 61–202 (SAIKKATVFL…LDVLQIKGEQ (142 aa)) is the DAGKc domain.

Belongs to the AGK family. Component of the TIM22 complex. Requires Mg(2+) as cofactor.

The protein localises to the mitochondrion inner membrane. It is found in the mitochondrion intermembrane space. It carries out the reaction a monoacylglycerol + ATP = a monoacyl-sn-glycero-3-phosphate + ADP + H(+). The enzyme catalyses a 1,2-diacyl-sn-glycerol + ATP = a 1,2-diacyl-sn-glycero-3-phosphate + ADP + H(+). It catalyses the reaction an N-acylsphing-4-enine + ATP = an N-acylsphing-4-enine 1-phosphate + ADP + H(+). The catalysed reaction is 1-(9Z-octadecenoyl)-sn-glycerol + ATP = 1-(9Z-octadecenoyl)-sn-glycero-3-phosphate + ADP + H(+). It carries out the reaction 1,2-di-(9Z-octadecenoyl)-sn-glycerol + ATP = 1,2-di-(9Z-octadecenoyl)-sn-glycero-3-phosphate + ADP + H(+). The enzyme catalyses a 1-acyl-sn-glycerol + ATP = a 1-acyl-sn-glycero-3-phosphate + ADP + H(+). It catalyses the reaction 1-hexadecanoyl-sn-glycerol + ATP = 1-hexadecanoyl-sn-glycero-3-phosphate + ADP + H(+). The catalysed reaction is a 2-acylglycerol + ATP = a 2-acyl-sn-glycerol 3-phosphate + ADP + H(+). It carries out the reaction 2-(5Z,8Z,11Z,14Z-eicosatetraenoyl)-glycerol + ATP = 2-(5Z,8Z,11Z,14Z-eicosatetraenoyl)-sn-glycero-3-phosphate + ADP + H(+). The enzyme catalyses 1-(5Z,8Z,11Z,14Z-eicosatetraenoyl)-sn-glycerol + ATP = 1-(5Z,8Z,11Z,14Z-eicosatetraenoyl)-sn-glycero-3-phosphate + ADP + H(+). It catalyses the reaction N-(hexanoyl)sphing-4-enine + ATP = N-hexanoylsphing-4-enine 1-phosphate + ADP + H(+). The protein operates within lipid metabolism; glycerolipid metabolism. Functionally, lipid kinase that can phosphorylate both monoacylglycerol and diacylglycerol to form lysophosphatidic acid (LPA) and phosphatidic acid (PA), respectively. Phosphorylates ceramide but not sphingosine. Phosphorylates 1,2-dioleoylglycerol more rapidly than 2,3-dioleoylglycerol. Independently of its lipid kinase activity, acts as a component of the TIM22 complex. The TIM22 complex mediates the import and insertion of multi-pass transmembrane proteins into the mitochondrial inner membrane by forming a twin-pore translocase that uses the membrane potential as the external driving force. This is Acylglycerol kinase, mitochondrial from Xenopus laevis (African clawed frog).